A 476-amino-acid chain; its full sequence is Aspartyl/glutamyl-tRNA(Asn/Gln) amidotransferase subunit B (476 aa).

Belongs to the GatB/GatE family. GatB subfamily. Heterotrimer of A, B and C subunits.

The catalysed reaction is L-glutamyl-tRNA(Gln) + L-glutamine + ATP + H2O = L-glutaminyl-tRNA(Gln) + L-glutamate + ADP + phosphate + H(+). It carries out the reaction L-aspartyl-tRNA(Asn) + L-glutamine + ATP + H2O = L-asparaginyl-tRNA(Asn) + L-glutamate + ADP + phosphate + 2 H(+). In terms of biological role, allows the formation of correctly charged Asn-tRNA(Asn) or Gln-tRNA(Gln) through the transamidation of misacylated Asp-tRNA(Asn) or Glu-tRNA(Gln) in organisms which lack either or both of asparaginyl-tRNA or glutaminyl-tRNA synthetases. The reaction takes place in the presence of glutamine and ATP through an activated phospho-Asp-tRNA(Asn) or phospho-Glu-tRNA(Gln). This Bacillus licheniformis (strain ATCC 14580 / DSM 13 / JCM 2505 / CCUG 7422 / NBRC 12200 / NCIMB 9375 / NCTC 10341 / NRRL NRS-1264 / Gibson 46) protein is Aspartyl/glutamyl-tRNA(Asn/Gln) amidotransferase subunit B.